A 319-amino-acid chain; its full sequence is MamJ paralog LimJ (319 aa).

Disordered stretches follow at residues 1-59 (MMME…PAPV) and 145-176 (AAAP…TETE). Residues 30-52 (AALAPAADAEIPASSAPEPAAPI) are compositionally biased toward low complexity. The segment covering 150–164 (PEPEPVPEPEPEPEP) has biased composition (acidic residues).

Belongs to the magnetosome MamJ protein family.

Its subcellular location is the magnetosome. Its function is as follows. Regulates the dynamic behavior of MamK filaments; paralog MamJ also promotes MamK turnover. At least one other protein besides MamJ and LimJ is required for MamK turnover. Might connect magnetosomes to MamK filaments. This is MamJ paralog LimJ from Paramagnetospirillum magneticum (strain ATCC 700264 / AMB-1) (Magnetospirillum magneticum).